The sequence spans 229 residues: Large ribosomal subunit protein uL1 (229 aa).

The protein belongs to the universal ribosomal protein uL1 family. In terms of assembly, part of the 50S ribosomal subunit.

Its function is as follows. Binds directly to 23S rRNA. The L1 stalk is quite mobile in the ribosome, and is involved in E site tRNA release. Protein L1 is also a translational repressor protein, it controls the translation of the L11 operon by binding to its mRNA. This chain is Large ribosomal subunit protein uL1, found in Pasteurella multocida (strain Pm70).